A 417-amino-acid polypeptide reads, in one-letter code: Probable dihydrofolate synthetase (417 aa).

34 to 37 provides a ligand contact to ATP; the sequence is GKGS. Serine 58, glutamate 123, and histidine 151 together coordinate Mg(2+). ATP is bound by residues arginine 274 and aspartate 289.

This sequence belongs to the folylpolyglutamate synthase family.

The enzyme catalyses 7,8-dihydropteroate + L-glutamate + ATP = 7,8-dihydrofolate + ADP + phosphate + H(+). Its pathway is cofactor biosynthesis; tetrahydrofolylpolyglutamate biosynthesis. Its function is as follows. Glutamate-adding enzyme which catalyzes the binding of the first glutamyl side chain to dihydropteroate. Leads to the de nove synthesis of tetrahydrofolate. de novo. This Schizosaccharomyces pombe (strain 972 / ATCC 24843) (Fission yeast) protein is Probable dihydrofolate synthetase (fol3).